The sequence spans 340 residues: Biotin synthase (340 aa).

The Radical SAM core domain maps to Ser47 to Lys269. The [4Fe-4S] cluster site is built by Cys62, Cys66, and Cys69. Residues Cys106, Cys137, Cys197, and Arg273 each contribute to the [2Fe-2S] cluster site.

This sequence belongs to the radical SAM superfamily. Biotin synthase family. As to quaternary structure, homodimer. Requires [4Fe-4S] cluster as cofactor. [2Fe-2S] cluster is required as a cofactor.

It catalyses the reaction (4R,5S)-dethiobiotin + (sulfur carrier)-SH + 2 reduced [2Fe-2S]-[ferredoxin] + 2 S-adenosyl-L-methionine = (sulfur carrier)-H + biotin + 2 5'-deoxyadenosine + 2 L-methionine + 2 oxidized [2Fe-2S]-[ferredoxin]. It participates in cofactor biosynthesis; biotin biosynthesis; biotin from 7,8-diaminononanoate: step 2/2. In terms of biological role, catalyzes the conversion of dethiobiotin (DTB) to biotin by the insertion of a sulfur atom into dethiobiotin via a radical-based mechanism. The protein is Biotin synthase of Caulobacter sp. (strain K31).